The chain runs to 220 residues: N-(5'-phosphoribosyl)anthranilate isomerase (220 aa).

The protein belongs to the TrpF family.

The catalysed reaction is N-(5-phospho-beta-D-ribosyl)anthranilate = 1-(2-carboxyphenylamino)-1-deoxy-D-ribulose 5-phosphate. It participates in amino-acid biosynthesis; L-tryptophan biosynthesis; L-tryptophan from chorismate: step 3/5. The chain is N-(5'-phosphoribosyl)anthranilate isomerase from Leptothrix cholodnii (strain ATCC 51168 / LMG 8142 / SP-6) (Leptothrix discophora (strain SP-6)).